A 142-amino-acid chain; its full sequence is Large ribosomal subunit protein uL11 (142 aa).

The protein belongs to the universal ribosomal protein uL11 family. Part of the ribosomal stalk of the 50S ribosomal subunit. Interacts with L10 and the large rRNA to form the base of the stalk. L10 forms an elongated spine to which L12 dimers bind in a sequential fashion forming a multimeric L10(L12)X complex. In terms of processing, one or more lysine residues are methylated.

Forms part of the ribosomal stalk which helps the ribosome interact with GTP-bound translation factors. This is Large ribosomal subunit protein uL11 from Shewanella sp. (strain W3-18-1).